Here is a 144-residue protein sequence, read N- to C-terminus: Transcriptional regulator MraZ (144 aa).

SpoVT-AbrB domains follow at residues 5–50 (TFNH…ALPQ) and 81–124 (AHEV…DRAA).

The protein belongs to the MraZ family. As to quaternary structure, forms oligomers.

The protein localises to the cytoplasm. Its subcellular location is the nucleoid. The sequence is that of Transcriptional regulator MraZ from Anaeromyxobacter dehalogenans (strain 2CP-C).